Consider the following 188-residue polypeptide: Elongation factor P (188 aa).

It belongs to the elongation factor P family.

Its subcellular location is the cytoplasm. The protein operates within protein biosynthesis; polypeptide chain elongation. Its function is as follows. Involved in peptide bond synthesis. Stimulates efficient translation and peptide-bond synthesis on native or reconstituted 70S ribosomes in vitro. Probably functions indirectly by altering the affinity of the ribosome for aminoacyl-tRNA, thus increasing their reactivity as acceptors for peptidyl transferase. This chain is Elongation factor P, found in Bacteroides thetaiotaomicron (strain ATCC 29148 / DSM 2079 / JCM 5827 / CCUG 10774 / NCTC 10582 / VPI-5482 / E50).